We begin with the raw amino-acid sequence, 92 residues long: Protein OPG096 (92 aa).

2 helical membrane passes run 39 to 59 (PLIR…IFTV) and 67 to 87 (QILL…LLYT).

It belongs to the orthopoxvirus OPG096 family. Interacts with OPG158.

Its subcellular location is the virion membrane. It localises to the host cytoplasm. The protein localises to the host endoplasmic reticulum membrane. In terms of biological role, early protein involved in virion morphogenesis. Participates in the formation and elongation of crescent-shaped membrane precursors of immature virions in cytoplasmic factories. The protein is Protein OPG096 (OPG096) of Monkeypox virus.